Consider the following 467-residue polypeptide: Ribulose bisphosphate carboxylase large chain (467 aa).

An N6,N6,N6-trimethyllysine modification is found at Lys-5. The substrate site is built by Asn-114 and Thr-164. Residue Lys-166 is the Proton acceptor of the active site. Lys-168 contacts substrate. Mg(2+) contacts are provided by Lys-192, Asp-194, and Glu-195. Residue Lys-192 is modified to N6-carboxylysine. The active-site Proton acceptor is His-285. Residues Arg-286, His-318, and Ser-370 each coordinate substrate.

This sequence belongs to the RuBisCO large chain family. Type I subfamily. As to quaternary structure, heterohexadecamer of 8 large chains and 8 small chains; disulfide-linked. The disulfide link is formed within the large subunit homodimers. It depends on Mg(2+) as a cofactor. The disulfide bond which can form in the large chain dimeric partners within the hexadecamer appears to be associated with oxidative stress and protein turnover.

The protein localises to the plastid. Its subcellular location is the chloroplast. The enzyme catalyses 2 (2R)-3-phosphoglycerate + 2 H(+) = D-ribulose 1,5-bisphosphate + CO2 + H2O. The catalysed reaction is D-ribulose 1,5-bisphosphate + O2 = 2-phosphoglycolate + (2R)-3-phosphoglycerate + 2 H(+). Its function is as follows. RuBisCO catalyzes two reactions: the carboxylation of D-ribulose 1,5-bisphosphate, the primary event in carbon dioxide fixation, as well as the oxidative fragmentation of the pentose substrate in the photorespiration process. Both reactions occur simultaneously and in competition at the same active site. The sequence is that of Ribulose bisphosphate carboxylase large chain from Eriodictyon californicum (California yerba santa).